Consider the following 269-residue polypeptide: Tryptophan synthase alpha chain (269 aa).

Residues glutamate 49 and aspartate 60 each act as proton acceptor in the active site.

Belongs to the TrpA family. As to quaternary structure, tetramer of two alpha and two beta chains.

It carries out the reaction (1S,2R)-1-C-(indol-3-yl)glycerol 3-phosphate + L-serine = D-glyceraldehyde 3-phosphate + L-tryptophan + H2O. It participates in amino-acid biosynthesis; L-tryptophan biosynthesis; L-tryptophan from chorismate: step 5/5. In terms of biological role, the alpha subunit is responsible for the aldol cleavage of indoleglycerol phosphate to indole and glyceraldehyde 3-phosphate. In Actinobacillus pleuropneumoniae serotype 7 (strain AP76), this protein is Tryptophan synthase alpha chain.